Reading from the N-terminus, the 458-residue chain is tRNA modification GTPase MnmE (458 aa).

(6S)-5-formyl-5,6,7,8-tetrahydrofolate-binding residues include R26, E88, and R127. In terms of domain architecture, TrmE-type G spans 224–378; it reads GLSTAIIGRP…IEDRINQLFF (155 aa). N234 contacts K(+). GTP is bound by residues 234 to 239, 253 to 259, and 278 to 281; these read NVGKSS, TDIAGTT, and DTAG. S238 contributes to the Mg(2+) binding site. K(+) is bound by residues T253, I255, and T258. T259 contributes to the Mg(2+) binding site. Position 458 (K458) interacts with (6S)-5-formyl-5,6,7,8-tetrahydrofolate.

Belongs to the TRAFAC class TrmE-Era-EngA-EngB-Septin-like GTPase superfamily. TrmE GTPase family. Homodimer. Heterotetramer of two MnmE and two MnmG subunits. K(+) serves as cofactor.

The protein localises to the cytoplasm. Its function is as follows. Exhibits a very high intrinsic GTPase hydrolysis rate. Involved in the addition of a carboxymethylaminomethyl (cmnm) group at the wobble position (U34) of certain tRNAs, forming tRNA-cmnm(5)s(2)U34. In Streptococcus pyogenes serotype M5 (strain Manfredo), this protein is tRNA modification GTPase MnmE.